Reading from the N-terminus, the 297-residue chain is uncharacterized protein (297 aa).

The N-terminal stretch at 1–24 (MRAINKFLITVCIALLASVAVALG) is a signal peptide. Residues cysteine 58, cysteine 61, histidine 62, cysteine 141, cysteine 144, histidine 145, cysteine 167, cysteine 170, histidine 171, cysteine 223, cysteine 226, histidine 227, cysteine 264, cysteine 267, and histidine 268 each coordinate heme. The interval 277–297 (TNSVDTWSREGEGAEVQQLPH) is disordered.

Post-translationally, binds 5 heme groups per subunit.

This is an uncharacterized protein from Archaeoglobus fulgidus (strain ATCC 49558 / DSM 4304 / JCM 9628 / NBRC 100126 / VC-16).